Consider the following 200-residue polypeptide: Lipopolysaccharide core heptose(II)-phosphate phosphatase (200 aa).

An N-terminal signal peptide occupies residues 1–25 (MLAFCRSSLKSKKYFIILLALAAIA).

Belongs to the phosphoglycerate mutase family. Ais subfamily.

Its subcellular location is the periplasm. The protein operates within bacterial outer membrane biogenesis; lipopolysaccharide metabolism. Functionally, catalyzes the dephosphorylation of heptose(II) of the outer membrane lipopolysaccharide core. The polypeptide is Lipopolysaccharide core heptose(II)-phosphate phosphatase (Escherichia coli O9:H4 (strain HS)).